Here is a 157-residue protein sequence, read N- to C-terminus: Globin (157 aa).

Gly1 bears the N-acetylglycine mark. The region spanning Ser8–Lys155 is the Globin domain. Residues His70 and His102 each contribute to the heme b site.

This sequence belongs to the globin family. Monomer.

In Nerita albicilla (Ox-palate nerite), this protein is Globin.